The chain runs to 363 residues: UDP-N-acetylglucosamine--N-acetylmuramyl-(pentapeptide) pyrophosphoryl-undecaprenol N-acetylglucosamine transferase (363 aa).

UDP-N-acetyl-alpha-D-glucosamine is bound by residues 15–17, Asn127, Arg169, Ser197, Ile251, 270–275, and Gln296; these read TGG and ALTVSE.

It belongs to the glycosyltransferase 28 family. MurG subfamily.

The protein localises to the cell inner membrane. The catalysed reaction is di-trans,octa-cis-undecaprenyl diphospho-N-acetyl-alpha-D-muramoyl-L-alanyl-D-glutamyl-meso-2,6-diaminopimeloyl-D-alanyl-D-alanine + UDP-N-acetyl-alpha-D-glucosamine = di-trans,octa-cis-undecaprenyl diphospho-[N-acetyl-alpha-D-glucosaminyl-(1-&gt;4)]-N-acetyl-alpha-D-muramoyl-L-alanyl-D-glutamyl-meso-2,6-diaminopimeloyl-D-alanyl-D-alanine + UDP + H(+). It participates in cell wall biogenesis; peptidoglycan biosynthesis. Functionally, cell wall formation. Catalyzes the transfer of a GlcNAc subunit on undecaprenyl-pyrophosphoryl-MurNAc-pentapeptide (lipid intermediate I) to form undecaprenyl-pyrophosphoryl-MurNAc-(pentapeptide)GlcNAc (lipid intermediate II). The sequence is that of UDP-N-acetylglucosamine--N-acetylmuramyl-(pentapeptide) pyrophosphoryl-undecaprenol N-acetylglucosamine transferase from Dichelobacter nodosus (strain VCS1703A).